The following is a 266-amino-acid chain: MGNIEAFKALFLGFIEGLTEFLPISSTGHLILFGHLIDFHSDSGRAFEVVIQLGAILAVCWLYRKKIIDLVQGFFSGDQEARHFTFSVLMAFFPAVIIGVLAVDFIKSVLFSPLVVAIALIIGGLIIFWVESRDFKPSTTEATKITFKQAIAVGFIQCLAMIPGTSRSGATIIGGMLSGLSRKAATEFSFFLAMPTMLGAATYDLLRNADVLTSDNMLNIGLGFITAFISALFVVKALVRFVEKHTLRVFAWYRIVLGIIIMFVML.

Transmembrane regions (helical) follow at residues 4-24 (IEAF…FLPI), 43-63 (SGRA…CWLY), 86-106 (FSVL…VDFI), 109-129 (VLFS…IIFW), 145-165 (ITFK…IPGT), 186-206 (TEFS…YDLL), 219-239 (NIGL…KALV), and 246-266 (TLRV…FVML).

Belongs to the UppP family.

The protein resides in the cell inner membrane. The catalysed reaction is di-trans,octa-cis-undecaprenyl diphosphate + H2O = di-trans,octa-cis-undecaprenyl phosphate + phosphate + H(+). Catalyzes the dephosphorylation of undecaprenyl diphosphate (UPP). Confers resistance to bacitracin. This chain is Undecaprenyl-diphosphatase 3, found in Acinetobacter baylyi (strain ATCC 33305 / BD413 / ADP1).